A 131-amino-acid polypeptide reads, in one-letter code: Small ribosomal subunit protein uS11 (131 aa).

The protein belongs to the universal ribosomal protein uS11 family. Part of the 30S ribosomal subunit. Interacts with proteins S7 and S18. Binds to IF-3.

Functionally, located on the platform of the 30S subunit, it bridges several disparate RNA helices of the 16S rRNA. Forms part of the Shine-Dalgarno cleft in the 70S ribosome. The chain is Small ribosomal subunit protein uS11 from Deinococcus deserti (strain DSM 17065 / CIP 109153 / LMG 22923 / VCD115).